Consider the following 122-residue polypeptide: uncharacterized protein (122 aa).

A coiled-coil region spans residues 79 to 114; sequence VIEDVASAIKEMMESAAKDLDKIEEVIKESLEKYLR.

This is an uncharacterized protein from Archaeoglobus fulgidus (strain ATCC 49558 / DSM 4304 / JCM 9628 / NBRC 100126 / VC-16).